The sequence spans 136 residues: Small ribosomal subunit protein uS11c (136 aa).

The protein belongs to the universal ribosomal protein uS11 family. In terms of assembly, part of the 30S ribosomal subunit.

The protein resides in the plastid. The protein is Small ribosomal subunit protein uS11c of Epifagus virginiana (Beechdrops).